Here is a 259-residue protein sequence, read N- to C-terminus: MINPIALKCGPLAIHWYALCILSGLVLAVYLASKEAPKKGISSDAIFDFILIAFPLAIVGARIYYVIFEWSYYVKHLDEIIAIWNGGIAIYGGLITGALVLLAYCYNKVLNPIHFLDIAAPSVMAAQAIGRWGNFINQEAYGKAVSQLNYLPSFIQKQMFIEGSYRIPTFLYESFWNLLGFVIIMMWRRKPKSLLDGEIFAFYLIWYGSGRLVIEGMRTDSLMFLGIRISQYVSALLIIIGLIFVIKRRRQKGISYYQE.

The next 4 helical transmembrane spans lie at 12–32 (LAIHWYALCILSGLVLAVYLA), 41–61 (ISSDAIFDFILIAFPLAIVGA), 80–100 (IIAIWNGGIAIYGGLITGALV), and 109–129 (VLNPIHFLDIAAPSVMAAQAI). Residue Arg-131 participates in a 1,2-diacyl-sn-glycero-3-phospho-(1'-sn-glycerol) binding. 3 consecutive transmembrane segments (helical) span residues 167–187 (IPTFLYESFWNLLGFVIIMMW), 194–214 (LLDGEIFAFYLIWYGSGRLVI), and 226–246 (GIRISQYVSALLIIIGLIFVI).

This sequence belongs to the Lgt family.

The protein localises to the cell membrane. It catalyses the reaction L-cysteinyl-[prolipoprotein] + a 1,2-diacyl-sn-glycero-3-phospho-(1'-sn-glycerol) = an S-1,2-diacyl-sn-glyceryl-L-cysteinyl-[prolipoprotein] + sn-glycerol 1-phosphate + H(+). It participates in protein modification; lipoprotein biosynthesis (diacylglyceryl transfer). Functionally, catalyzes the transfer of the diacylglyceryl group from phosphatidylglycerol to the sulfhydryl group of the N-terminal cysteine of a prolipoprotein, the first step in the formation of mature lipoproteins. In Streptococcus pyogenes serotype M3 (strain ATCC BAA-595 / MGAS315), this protein is Phosphatidylglycerol--prolipoprotein diacylglyceryl transferase.